Reading from the N-terminus, the 501-residue chain is Glutamyl-tRNA(Gln) amidotransferase subunit A (501 aa).

Catalysis depends on charge relay system residues lysine 80 and serine 155. Serine 179 functions as the Acyl-ester intermediate in the catalytic mechanism.

Belongs to the amidase family. GatA subfamily. Heterotrimer of A, B and C subunits.

It carries out the reaction L-glutamyl-tRNA(Gln) + L-glutamine + ATP + H2O = L-glutaminyl-tRNA(Gln) + L-glutamate + ADP + phosphate + H(+). Its function is as follows. Allows the formation of correctly charged Gln-tRNA(Gln) through the transamidation of misacylated Glu-tRNA(Gln) in organisms which lack glutaminyl-tRNA synthetase. The reaction takes place in the presence of glutamine and ATP through an activated gamma-phospho-Glu-tRNA(Gln). This Cupriavidus necator (strain ATCC 17699 / DSM 428 / KCTC 22496 / NCIMB 10442 / H16 / Stanier 337) (Ralstonia eutropha) protein is Glutamyl-tRNA(Gln) amidotransferase subunit A.